The primary structure comprises 1383 residues: PAS domain-containing serine/threonine-protein kinase (1383 aa).

Position 1 is an N-acetylmethionine (Met-1). Phosphoserine is present on Ser-19. Thr-31 is subject to Phosphothreonine. 2 PAS domains span residues 117–188 (SGSL…VEAD) and 333–400 (YQAS…SVQL). A Phosphoserine modification is found at Ser-1000. The 253-residue stretch at 1059 to 1311 (YNTISPLGSG…LEKLIRDPWV (253 aa)) folds into the Protein kinase domain. Residues 1065 to 1073 (LGSGAFGFV), Lys-1088, and 1142 to 1149 (EKHGSGMD) contribute to the ATP site. The active-site Proton acceptor is Asp-1188. Asp-1206 contributes to the ATP binding site. Phosphothreonine; by autocatalysis occurs at positions 1221 and 1225. The segment at 1344–1383 (GSRSPSEMAQREGLCGPPAPRETRGDQHCLHLKDPSLPVS) is disordered. A compositionally biased stretch (basic and acidic residues) spans 1364–1377 (RETRGDQHCLHLKD).

Belongs to the protein kinase superfamily. CAMK Ser/Thr protein kinase family. Post-translationally, autophosphorylated on Thr-1221 and Thr-1225. Autophosphorylation is activated by phospholipids. As to expression, ubiquitously expressed. Strongly up-regulated in postmeiotic germ cells during spermatogenesis.

The protein localises to the cytoplasm. The protein resides in the nucleus. It catalyses the reaction L-seryl-[protein] + ATP = O-phospho-L-seryl-[protein] + ADP + H(+). It carries out the reaction L-threonyl-[protein] + ATP = O-phospho-L-threonyl-[protein] + ADP + H(+). Protein kinase activity is inhibited by the first PAS domain: binding of an unidentified ligand desinhibits the protein kinase activity. May be activated by autophosphorylation on Thr-1221 and Thr-1225. Autophosphorylation is enhanced upon phosphatidylinositol monophosphate (phosphatidylinositol 4-phosphate) binding and inhibited upon phosphatidylinositol bi- and tri-phosphate binding. In contrast, phosphorylation of target proteins is inhibited upon all phosphatidylinositol-binding (phosphatidylinositol mono- bi- and tri-phosphate). Serine/threonine-protein kinase involved in energy homeostasis and protein translation. Phosphorylates EEF1A1, GYS1, PDX1 and RPS6. Probably plays a role under changing environmental conditions (oxygen, glucose, nutrition), rather than under standard conditions. Acts as a sensor involved in energy homeostasis: regulates glycogen synthase synthesis by mediating phosphorylation of GYS1, leading to GYS1 inactivation. May be involved in glucose-stimulated insulin production in pancreas and regulation of glucagon secretion by glucose in alpha cells; however such data require additional evidences. May play a role in regulation of protein translation by phosphorylating EEF1A1, leading to increase translation efficiency. May also participate in respiratory regulation. The chain is PAS domain-containing serine/threonine-protein kinase (Pask) from Mus musculus (Mouse).